The primary structure comprises 241 residues: Biosynthetic peptidoglycan transglycosylase (241 aa).

A helical transmembrane segment spans residues 18–38 (GVIGIIALWMAGILIFAFLPV).

This sequence belongs to the glycosyltransferase 51 family.

It is found in the cell inner membrane. The enzyme catalyses [GlcNAc-(1-&gt;4)-Mur2Ac(oyl-L-Ala-gamma-D-Glu-L-Lys-D-Ala-D-Ala)](n)-di-trans,octa-cis-undecaprenyl diphosphate + beta-D-GlcNAc-(1-&gt;4)-Mur2Ac(oyl-L-Ala-gamma-D-Glu-L-Lys-D-Ala-D-Ala)-di-trans,octa-cis-undecaprenyl diphosphate = [GlcNAc-(1-&gt;4)-Mur2Ac(oyl-L-Ala-gamma-D-Glu-L-Lys-D-Ala-D-Ala)](n+1)-di-trans,octa-cis-undecaprenyl diphosphate + di-trans,octa-cis-undecaprenyl diphosphate + H(+). It participates in cell wall biogenesis; peptidoglycan biosynthesis. In terms of biological role, peptidoglycan polymerase that catalyzes glycan chain elongation from lipid-linked precursors. The polypeptide is Biosynthetic peptidoglycan transglycosylase (Yersinia pseudotuberculosis serotype O:3 (strain YPIII)).